The following is a 378-amino-acid chain: 4-hydroxy-3-methylbut-2-en-1-yl diphosphate synthase (flavodoxin) (378 aa).

Positions 268, 271, 303, and 310 each coordinate [4Fe-4S] cluster.

This sequence belongs to the IspG family. The cofactor is [4Fe-4S] cluster.

It catalyses the reaction (2E)-4-hydroxy-3-methylbut-2-enyl diphosphate + oxidized [flavodoxin] + H2O + 2 H(+) = 2-C-methyl-D-erythritol 2,4-cyclic diphosphate + reduced [flavodoxin]. It participates in isoprenoid biosynthesis; isopentenyl diphosphate biosynthesis via DXP pathway; isopentenyl diphosphate from 1-deoxy-D-xylulose 5-phosphate: step 5/6. Functionally, converts 2C-methyl-D-erythritol 2,4-cyclodiphosphate (ME-2,4cPP) into 1-hydroxy-2-methyl-2-(E)-butenyl 4-diphosphate. This Corynebacterium efficiens (strain DSM 44549 / YS-314 / AJ 12310 / JCM 11189 / NBRC 100395) protein is 4-hydroxy-3-methylbut-2-en-1-yl diphosphate synthase (flavodoxin).